The following is a 205-amino-acid chain: Protein GrpE (205 aa).

The protein belongs to the GrpE family. In terms of assembly, homodimer.

Its subcellular location is the cytoplasm. Its function is as follows. Participates actively in the response to hyperosmotic and heat shock by preventing the aggregation of stress-denatured proteins, in association with DnaK and GrpE. It is the nucleotide exchange factor for DnaK and may function as a thermosensor. Unfolded proteins bind initially to DnaJ; upon interaction with the DnaJ-bound protein, DnaK hydrolyzes its bound ATP, resulting in the formation of a stable complex. GrpE releases ADP from DnaK; ATP binding to DnaK triggers the release of the substrate protein, thus completing the reaction cycle. Several rounds of ATP-dependent interactions between DnaJ, DnaK and GrpE are required for fully efficient folding. This chain is Protein GrpE, found in Shewanella loihica (strain ATCC BAA-1088 / PV-4).